Here is a 392-residue protein sequence, read N- to C-terminus: Type III polyketide synthase B (392 aa).

57–64 (KLTRLCKT) is a CoA binding site. Cysteine 166 acts as the Nucleophile in catalysis. 218–219 (GD) serves as a coordination point for substrate. CoA-binding positions include leucine 269, 309–312 (GGPA), and alanine 312.

This sequence belongs to the thiolase-like superfamily. Chalcone/stilbene synthases family. Homodimer. Interacts with 4CLL1/ACOS5 and TKPR1. In terms of tissue distribution, expressed in flowers and flower buds (at protein level). Mostly confined to anther tapetal cells.

It localises to the endoplasmic reticulum. It functions in the pathway secondary metabolite biosynthesis; flavonoid biosynthesis. In terms of biological role, plant type III polyketide synthases (PKSs) that catalyzes the condensation of malonyl-CoA units with various CoA ester starter molecules to generate a diverse array of natural products including long-chain alkyl alpha-pyrones. Accepts up to C(20) chain-length fatty acyl CoAs as starter substrates, and carries out sequential condensations with malonyl-CoA to produce triketide and tetraketide alpha-pyrones, potential sporopollenin precursors. Favorite substrates for are midchain- and v-hydroxylated fatty acyl-CoAs (e.g. 12-hydroxyoctadecanoyl-CoA and 16-hydroxyhexadecanoyl-CoA). Required for pollen development and sporopollenin biosynthesis, the major constituent of exine in the outer pollen wall. In vitro, can use 4-coumaroyl-coenzyme A as substrate to produce bis-noryangonin and fatty acyl-coenzyme A as substrate to produce medium-chain alkyl pyrones. May play a role in both the synthesis of pollen fatty acids and phenolics found in exine. The protein is Type III polyketide synthase B of Arabidopsis thaliana (Mouse-ear cress).